The sequence spans 698 residues: Polyribonucleotide nucleotidyltransferase (698 aa).

2 residues coordinate Mg(2+): aspartate 488 and aspartate 494. The KH domain maps to 555–614; sequence PRLLTIRIDPDKIRDVIGKGGATIRALTEETGTTIDISDDGKVTIASADKAAADEARRRI. Positions 624–692 constitute an S1 motif domain; that stretch reads GTVYEGKVSK…RQGRIRLSMK (69 aa).

This sequence belongs to the polyribonucleotide nucleotidyltransferase family. As to quaternary structure, component of the RNA degradosome, which is a multiprotein complex involved in RNA processing and mRNA degradation. Mg(2+) serves as cofactor.

The protein localises to the cytoplasm. It carries out the reaction RNA(n+1) + phosphate = RNA(n) + a ribonucleoside 5'-diphosphate. Involved in mRNA degradation. Catalyzes the phosphorolysis of single-stranded polyribonucleotides processively in the 3'- to 5'-direction. This is Polyribonucleotide nucleotidyltransferase from Alkalilimnicola ehrlichii (strain ATCC BAA-1101 / DSM 17681 / MLHE-1).